The following is a 114-amino-acid chain: Evasin P1096 (114 aa).

The N-terminal stretch at 1 to 23 is a signal peptide; that stretch reads MELNAFTILHIAVFIAVGYYANT. Intrachain disulfides connect Cys47–Cys65, Cys51–Cys67, and Cys61–Cys78. A glycan (N-linked (GlcNAc...) asparagine) is linked at Asn50. Residues 89-114 are disordered; it reads DPSQDPSIDEAAPRESVSKRRSNGES. Over residues 99–114 the composition is skewed to basic and acidic residues; that stretch reads AAPRESVSKRRSNGES.

The protein localises to the secreted. Functionally, salivary chemokine-binding protein which binds to host chemokine CXCL8. The protein is Evasin P1096 of Ixodes ricinus (Common tick).